The chain runs to 359 residues: N-acetyl-gamma-glutamyl-phosphate reductase (359 aa).

Residue Cys-162 is part of the active site.

This sequence belongs to the NAGSA dehydrogenase family. Type 1 subfamily.

It localises to the cytoplasm. The catalysed reaction is N-acetyl-L-glutamate 5-semialdehyde + phosphate + NADP(+) = N-acetyl-L-glutamyl 5-phosphate + NADPH + H(+). It functions in the pathway amino-acid biosynthesis; L-arginine biosynthesis; N(2)-acetyl-L-ornithine from L-glutamate: step 3/4. In terms of biological role, catalyzes the NADPH-dependent reduction of N-acetyl-5-glutamyl phosphate to yield N-acetyl-L-glutamate 5-semialdehyde. The polypeptide is N-acetyl-gamma-glutamyl-phosphate reductase (Prochlorococcus marinus (strain SARG / CCMP1375 / SS120)).